The primary structure comprises 293 residues: Elongation factor Ts (293 aa).

The tract at residues 80–83 is involved in Mg(2+) ion dislocation from EF-Tu; sequence TDFV.

Belongs to the EF-Ts family.

The protein localises to the cytoplasm. In terms of biological role, associates with the EF-Tu.GDP complex and induces the exchange of GDP to GTP. It remains bound to the aminoacyl-tRNA.EF-Tu.GTP complex up to the GTP hydrolysis stage on the ribosome. This is Elongation factor Ts from Staphylococcus aureus (strain USA300).